Reading from the N-terminus, the 272-residue chain is HMP-PP phosphatase (272 aa).

The active-site Nucleophile is D8. Mg(2+) is bound by residues D8, D10, and D212.

The protein belongs to the HAD-like hydrolase superfamily. Cof family. The cofactor is Mg(2+).

It catalyses the reaction 4-amino-2-methyl-5-(diphosphooxymethyl)pyrimidine + H2O = 4-amino-2-methyl-5-(phosphooxymethyl)pyrimidine + phosphate + H(+). In terms of biological role, catalyzes the hydrolysis of 4-amino-2-methyl-5-hydroxymethylpyrimidine pyrophosphate (HMP-PP) to 4-amino-2-methyl-5-hydroxymethylpyrimidine phosphate (HMP-P). In Salmonella schwarzengrund (strain CVM19633), this protein is HMP-PP phosphatase.